Consider the following 706-residue polypeptide: Mitochondrial intermediate peptidase, mitochondrial (706 aa).

The N-terminal 29 residues, 1–29 (MWKLTRRLQPHINSTRWLVRNFRNGGAGD), are a transit peptide targeting the mitochondrion. The interval 212–238 (NPTYRSTSGGSRGSTRSAHKSKQKGFR) is disordered. Positions 214–227 (TYRSTSGGSRGSTR) are enriched in low complexity. Residue His491 coordinates Zn(2+). Glu492 is a catalytic residue. Zn(2+) contacts are provided by His495 and Glu520.

The protein belongs to the peptidase M3 family. Requires Zn(2+) as cofactor.

It localises to the mitochondrion. Its function is as follows. Aminopeptidase which cleaves preproteins, imported into the mitochondrion, to their mature size. Could cleave both preproteins and preprotein intermediates already cleaved by the mitochondrial processing peptidase (MPP). The chain is Mitochondrial intermediate peptidase, mitochondrial from Arabidopsis thaliana (Mouse-ear cress).